We begin with the raw amino-acid sequence, 162 residues long: Cadmium metallothionein (162 aa).

The propeptide occupies 1-2 (MD).

In terms of biological role, the metallothioneins are involved in the cellular sequestration of toxic metal ions. This chain is Cadmium metallothionein (MTT1), found in Tetrahymena thermophila.